The following is a 187-amino-acid chain: Probable DNA endonuclease SmrA (187 aa).

A Smr domain is found at 88-169 (LNLLRQPVEE…GSGACYVALR (82 aa)).

Its function is as follows. Has DNA endonuclease activity. Binds DNA. This is Probable DNA endonuclease SmrA (smrA) from Escherichia coli (strain K12).